We begin with the raw amino-acid sequence, 313 residues long: Pyrimidine-specific ribonucleoside hydrolase RihB (313 aa).

The active-site Proton acceptor is the aspartate 11. Positions 11, 16, and 124 each coordinate Ca(2+). Substrate-binding residues include glutamine 227 and histidine 239. Position 240 (aspartate 240) interacts with Ca(2+).

The protein belongs to the IUNH family. RihB subfamily. Homotetramer. Ca(2+) is required as a cofactor.

The catalysed reaction is a pyrimidine ribonucleoside + H2O = a pyrimidine nucleobase + D-ribose. Its function is as follows. Hydrolyzes cytidine or uridine to ribose and cytosine or uracil, respectively. Has a clear preference for cytidine over uridine. Strictly specific for ribonucleosides. The protein is Pyrimidine-specific ribonucleoside hydrolase RihB of Escherichia coli O9:H4 (strain HS).